We begin with the raw amino-acid sequence, 266 residues long: Large ribosomal subunit protein eL8 (266 aa).

Residues K11, K20, and K21 each participate in a glycyl lysine isopeptide (Lys-Gly) (interchain with G-Cter in SUMO2) cross-link. K34 is modified (N6-acetyllysine). Residue K48 forms a Glycyl lysine isopeptide (Lys-Gly) (interchain with G-Cter in SUMO2) linkage. K97 bears the N6-acetyllysine; alternate mark. Residue K97 forms a Glycyl lysine isopeptide (Lys-Gly) (interchain with G-Cter in SUMO2); alternate linkage. A Glycyl lysine isopeptide (Lys-Gly) (interchain with G-Cter in SUMO2) cross-link involves residue K125. The residue at position 217 (K217) is an N6-acetyllysine. Residue K245 forms a Glycyl lysine isopeptide (Lys-Gly) (interchain with G-Cter in SUMO2) linkage.

It belongs to the eukaryotic ribosomal protein eL8 family. As to quaternary structure, component of the large ribosomal subunit. Interacts with CRY1. Interacts with DICER1, AGO2, TARBP2, MOV10 and EIF6; they form a large RNA-induced silencing complex (RISC).

The protein localises to the cytoplasm. In terms of biological role, component of the large ribosomal subunit. The ribosome is a large ribonucleoprotein complex responsible for the synthesis of proteins in the cell. The chain is Large ribosomal subunit protein eL8 (RPL7A) from Bos taurus (Bovine).